We begin with the raw amino-acid sequence, 129 residues long: UPF0102 protein Mnod_0024 (129 aa).

Belongs to the UPF0102 family.

This Methylobacterium nodulans (strain LMG 21967 / CNCM I-2342 / ORS 2060) protein is UPF0102 protein Mnod_0024.